A 364-amino-acid chain; its full sequence is Anthranilate phosphoribosyltransferase (364 aa).

Polar residues predominate over residues 1 to 10 (MTSGPSQPFP). The disordered stretch occupies residues 1–22 (MTSGPSQPFPSASGPDDGPSWP). Residues glycine 101, 104–105 (GD), threonine 109, 111–114 (NLST), 129–137 (KHGNRAASS), and glycine 141 contribute to the 5-phospho-alpha-D-ribose 1-diphosphate site. Position 101 (glycine 101) interacts with anthranilate. Serine 113 provides a ligand contact to Mg(2+). Asparagine 132 serves as a coordination point for anthranilate. Arginine 187 is an anthranilate binding site. Residues aspartate 245 and glutamate 246 each contribute to the Mg(2+) site.

This sequence belongs to the anthranilate phosphoribosyltransferase family. As to quaternary structure, homodimer. Requires Mg(2+) as cofactor.

The enzyme catalyses N-(5-phospho-beta-D-ribosyl)anthranilate + diphosphate = 5-phospho-alpha-D-ribose 1-diphosphate + anthranilate. The protein operates within amino-acid biosynthesis; L-tryptophan biosynthesis; L-tryptophan from chorismate: step 2/5. In terms of biological role, catalyzes the transfer of the phosphoribosyl group of 5-phosphorylribose-1-pyrophosphate (PRPP) to anthranilate to yield N-(5'-phosphoribosyl)-anthranilate (PRA). This chain is Anthranilate phosphoribosyltransferase, found in Mycolicibacterium smegmatis (strain ATCC 700084 / mc(2)155) (Mycobacterium smegmatis).